Consider the following 393-residue polypeptide: F-box/kelch-repeat protein At4g19865 (393 aa).

The tract at residues 1–30 is disordered; it reads MNFQVEPPEKKKTKNSSPPHSPPSSSSPSL. In terms of domain architecture, F-box spans 27–73; the sequence is SPSLSLLPEEIVVHCLARISRLYYPTLSLVSKSFRSILSSTELYATR. Kelch repeat units lie at residues 148–190, 191–237, 239–272, and 273–320; these read EIYV…FHDG, KIYV…RSGV, EGKIEFGNVNEMCAYDTKLCKWEYCVNKSAALRS, and ECMI…GGSS.

The protein is F-box/kelch-repeat protein At4g19865 of Arabidopsis thaliana (Mouse-ear cress).